The primary structure comprises 439 residues: Probable cysteine protease atg4 (439 aa).

Positions 65–91 (LSTTETTTPPDSTVGSLESSSEYDNCD) are disordered. A compositionally biased stretch (low complexity) spans 66-77 (STTETTTPPDST). Polar residues predominate over residues 78–91 (VGSLESSSEYDNCD). The active-site Nucleophile is the C158. Residues D332 and H334 contribute to the active site.

Belongs to the peptidase C54 family.

It is found in the cytoplasm. Its subcellular location is the nucleus. It localises to the preautophagosomal structure. The catalysed reaction is [protein]-C-terminal L-amino acid-glycyl-phosphatidylethanolamide + H2O = [protein]-C-terminal L-amino acid-glycine + a 1,2-diacyl-sn-glycero-3-phosphoethanolamine. Cysteine protease that plays a key role in cytoplasm to vacuole transport (Cvt) and autophagy by mediating both proteolytic activation and delipidation of ATG8. Required for selective autophagic degradation of the nucleus (nucleophagy) as well as for mitophagy which contributes to regulate mitochondrial quantity and quality by eliminating the mitochondria to a basal level to fulfill cellular energy requirements and preventing excess ROS production. The protease activity is required for proteolytic activation of ATG8: cleaves the C-terminal amino acid of ATG8 to reveal a C-terminal glycine. ATG8 ubiquitin-like activity requires the exposure of the glycine at the C-terminus for its conjugation to phosphatidylethanolamine (PE) and its insertion to membranes, which is necessary for autophagy. The ATG8-PE conjugate mediates tethering between adjacent membranes and stimulates membrane hemifusion, leading to expansion of the autophagosomal membrane during autophagy. In addition to the protease activity, also catalyzes deconjugation of PE-conjugated forms of ATG8 during macroautophagy: ATG8 delipidation is required to release the protein from membranes, which facilitates multiple events during macroautophagy, and especially for efficient autophagosome biogenesis, the assembly of ATG9-containing tubulovesicular clusters into phagophores/autophagosomes, and for the disassembly of PAS-associated ATG components. ATG8 delipidation by ATG4 also recycles ATG8-PE generated on inappropriate membranes to maintain a reservoir of unlipidated ATG8 that is required for autophagosome formation at the PAS. The polypeptide is Probable cysteine protease atg4 (atg4) (Sclerotinia sclerotiorum (strain ATCC 18683 / 1980 / Ss-1) (White mold)).